Reading from the N-terminus, the 1631-residue chain is Ras GTPase-activating-like protein IQGAP3 (1631 aa).

The Calponin-homology (CH) domain maps to 34 to 149 (LCRLEEAKRW…YCIHALSLFL (116 aa)). Y162 bears the Phosphotyrosine mark. S539 is modified (phosphoserine). 4 consecutive IQ domains span residues 730 to 759 (NVGF…FLRT), 760 to 789 (WLPA…YFKA), 790 to 819 (NLDA…YFQK), and 820 to 849 (NVNS…APHP). The region spanning 1004-1253 (YLLLQLFKTA…LKFRKFIHRA (250 aa)) is the Ras-GAP domain. S1424 carries the phosphoserine modification.

The protein is Ras GTPase-activating-like protein IQGAP3 (IQGAP3) of Homo sapiens (Human).